Here is a 266-residue protein sequence, read N- to C-terminus: MRSFSGAVWERQVSLGAPSWPAAMGDRIYSLEARAVARSVLARPRRPRAPRPRLRLRGRPGRGRGGLLGAGPREACLATPGPPTPPCSSGTSQTPPAPGQMKSKERHLCSPSDHRRSRSPSQRRSRSRSSSWGRDRRHSDSLKESRHRRSSYSQSKSRSKSLPRQSTSLRQSRTPRRNSGSRGRSRSKSLPKRSKSMEKSQSRSPQKQTGSGAKSRPHGRHCDSIARSPCKSPRAYTSSGSKTQTTKHSHLRSHSRSRSYHHKNSW.

The interval 42–266 (ARPRRPRAPR…SRSYHHKNSW (225 aa)) is disordered. Residues 43-62 (RPRRPRAPRPRLRLRGRPGR) show a composition bias toward basic residues. Positions 102–114 (KSKERHLCSPSDH) are enriched in basic and acidic residues. Over residues 115–127 (RRSRSPSQRRSRS) the composition is skewed to basic residues. Residues 133-144 (GRDRRHSDSLKE) show a composition bias toward basic and acidic residues. The segment covering 151–166 (SYSQSKSRSKSLPRQS) has biased composition (low complexity). Residues 183–194 (GRSRSKSLPKRS) are compositionally biased toward basic residues. Polar residues-rich tracts occupy residues 202–212 (SRSPQKQTGSG) and 235–244 (AYTSSGSKTQ). The segment covering 245–266 (TTKHSHLRSHSRSRSYHHKNSW) has biased composition (basic residues).

This sequence belongs to the splicing factor SR family.

Its subcellular location is the nucleus. Its function is as follows. Splicing factor that seems to antagonize SR proteins in pre-mRNA splicing regulation. This chain is Serine/arginine-rich splicing factor 12 (Srsf12), found in Mus musculus (Mouse).